Reading from the N-terminus, the 373-residue chain is Cathecol O-methyltransferase 1 (373 aa).

Residues glycine 209, aspartate 232, aspartate 252, methionine 253, methionine 265, and lysine 266 each contribute to the S-adenosyl-L-homocysteine site. Aspartate 232 is a binding site for S-adenosyl-L-methionine. The Proton acceptor role is filled by histidine 279.

Belongs to the class I-like SAM-binding methyltransferase superfamily. Cation-independent O-methyltransferase family. COMT subfamily.

The catalysed reaction is catechol + S-adenosyl-L-methionine = guaiacol + S-adenosyl-L-homocysteine + H(+). In terms of biological role, O-methyltransferase that catalyzes the conversion of catechol to guaiacol. Involved in the production of guaiacol in fruits. The polypeptide is Cathecol O-methyltransferase 1 (Solanum lycopersicum (Tomato)).